A 644-amino-acid chain; its full sequence is ATP-dependent zinc metalloprotease FtsH (644 aa).

The Stromal portion of the chain corresponds to 1–11 (MNDNKNNTVRN). A helical transmembrane segment spans residues 12-32 (LLIGIALLSGISLTAKKFDLI). The Lumenal portion of the chain corresponds to 33-128 (GVQGSESGKN…FDAHPAEQKN (96 aa)). A helical transmembrane segment spans residues 129–149 (IFVNILSNILLPIIFITGLVY). At 150–644 (LFQNSENFGG…KNIPYVSKFN (495 aa)) the chain is on the stromal side. ATP is bound at residue 226-233 (GPPGTGKT). His447 is a binding site for Zn(2+). Glu448 is a catalytic residue. The Zn(2+) site is built by His451 and Asp525.

In the central section; belongs to the AAA ATPase family. It in the C-terminal section; belongs to the peptidase M41 family. Homohexamer. The cofactor is Zn(2+).

The protein resides in the plastid. It localises to the chloroplast thylakoid membrane. Its function is as follows. Acts as a processive, ATP-dependent zinc metallopeptidase. In Trieres chinensis (Marine centric diatom), this protein is ATP-dependent zinc metalloprotease FtsH.